The primary structure comprises 419 residues: Imidazolonepropionase (419 aa).

The Fe(3+) site is built by histidine 82 and histidine 84. Zn(2+)-binding residues include histidine 82 and histidine 84. Arginine 91, tyrosine 154, and histidine 187 together coordinate 4-imidazolone-5-propanoate. Tyrosine 154 contributes to the N-formimidoyl-L-glutamate binding site. Histidine 252 contributes to the Fe(3+) binding site. Residue histidine 252 coordinates Zn(2+). Glutamate 255 is a 4-imidazolone-5-propanoate binding site. Aspartate 326 contributes to the Fe(3+) binding site. Zn(2+) is bound at residue aspartate 326. The N-formimidoyl-L-glutamate site is built by asparagine 328 and glycine 330. Serine 331 is a 4-imidazolone-5-propanoate binding site.

This sequence belongs to the metallo-dependent hydrolases superfamily. HutI family. Requires Zn(2+) as cofactor. It depends on Fe(3+) as a cofactor.

It localises to the cytoplasm. It carries out the reaction 4-imidazolone-5-propanoate + H2O = N-formimidoyl-L-glutamate. It functions in the pathway amino-acid degradation; L-histidine degradation into L-glutamate; N-formimidoyl-L-glutamate from L-histidine: step 3/3. In terms of biological role, catalyzes the hydrolytic cleavage of the carbon-nitrogen bond in imidazolone-5-propanoate to yield N-formimidoyl-L-glutamate. It is the third step in the universal histidine degradation pathway. The protein is Imidazolonepropionase of Clostridium tetani (strain Massachusetts / E88).